The primary structure comprises 151 residues: Ribosome maturation factor RimP (151 aa).

This sequence belongs to the RimP family.

It localises to the cytoplasm. Functionally, required for maturation of 30S ribosomal subunits. This is Ribosome maturation factor RimP from Shewanella piezotolerans (strain WP3 / JCM 13877).